The chain runs to 198 residues: Mitrocomin (198 aa).

The propeptide occupies 1–8 (MSMGSRYA). 3 EF-hand domains span residues 19 to 54 (KWIARHKHMFNFLDINSNGQINLNEMVHKASNIICK), 118 to 147 (DALFDIIDKDRNGSVSLDEWIQYTHCAGIQ), and 148 to 183 (QSRGQCEATFAHCDLDGDGKLDVDEMTRQHLGFWYS). 15 residues coordinate Ca(2+): aspartate 32, asparagine 34, asparagine 36, glutamine 38, glutamate 43, aspartate 125, aspartate 127, asparagine 129, serine 131, glutamate 136, aspartate 161, aspartate 163, aspartate 165, lysine 167, and glutamate 172.

This sequence belongs to the aequorin family.

Ca(2+)-dependent bioluminescence photoprotein. Displays an emission peak at 470 nm (blue light). Trace amounts of calcium ion trigger the intramolecular oxidation of the chromophore, coelenterazine into coelenteramide and CO(2) with the concomitant emission of light. The polypeptide is Mitrocomin (MI17) (Mitrocoma cellularia (Cross jellyfish)).